The sequence spans 463 residues: A-type ATP synthase subunit B (463 aa).

This sequence belongs to the ATPase alpha/beta chains family. In terms of assembly, has multiple subunits with at least A(3), B(3), C, D, E, F, H, I and proteolipid K(x).

It is found in the cell membrane. In terms of biological role, component of the A-type ATP synthase that produces ATP from ADP in the presence of a proton gradient across the membrane. The B chain is a regulatory subunit. In Methanothermobacter thermautotrophicus (strain ATCC 29096 / DSM 1053 / JCM 10044 / NBRC 100330 / Delta H) (Methanobacterium thermoautotrophicum), this protein is A-type ATP synthase subunit B.